Reading from the N-terminus, the 122-residue chain is Large ribosomal subunit protein uL14c (122 aa).

Belongs to the universal ribosomal protein uL14 family. Part of the 50S ribosomal subunit.

The protein resides in the plastid. It is found in the chloroplast. In terms of biological role, binds to 23S rRNA. In Physcomitrium patens (Spreading-leaved earth moss), this protein is Large ribosomal subunit protein uL14c.